Reading from the N-terminus, the 566-residue chain is Mucolipin-2 (566 aa).

Topologically, residues 1 to 65 are cytoplasmic; that stretch reads MPGDEETLDL…YRARRQIPWK (65 aa). A helical transmembrane segment spans residues 66–86; the sequence is LGLQILKIVMVTTQLVRFGLS. Topologically, residues 87–288 are extracellular; sequence NQLVVAFKED…ISGSTQRSTH (202 aa). The interval 107 to 123 is extracellular/lumenal pore loop; that stretch reads KGFSGVDEDDYSCSIYT. Cystine bridges form between cysteine 164/cysteine 190 and cysteine 243/cysteine 274. The helical transmembrane segment at 289–309 threads the bilayer; it reads YLLVFDVFVIMICLASLILCT. At 310 to 346 the chain is on the cytoplasmic side; sequence RSIVLALRLRKRFLNFFLEKYKQRVCGADQWEFVNGW. The helical transmembrane segment at 347–367 threads the bilayer; sequence YVLVTISDLMTIIGSILKMEI. The Extracellular segment spans residues 368-376; it reads KAKKLTNYD. A helical membrane pass occupies residues 377–397; that stretch reads VCSILLGTSTLFVWVGVIRYL. Residues 398–419 lie on the Cytoplasmic side of the membrane; sequence GYFQTYNVLILTMQASLPKVLR. The chain crosses the membrane as a helical span at residues 420 to 440; the sequence is FCACAGMIYLGYTFCGWIVLG. Topologically, residues 441–448 are extracellular; that stretch reads PYHEKFEN. The segment at residues 449-469 is an intramembrane region (pore-forming); it reads LNIVAECLFSLVNGDDMFATF. The Selectivity filter signature appears at 461–464; that stretch reads NGDD. At 470–480 the chain is on the extracellular side; it reads AQIQQKSILVW. Residues 481–502 traverse the membrane as a helical segment; the sequence is LFSRLYLYSFISLFIYMVLSLF. The Cytoplasmic segment spans residues 503-566; that stretch reads IALITDSYHT…RSNDHLILID (64 aa).

It belongs to the transient receptor (TC 1.A.4) family. Polycystin subfamily. MCOLN2 sub-subfamily. Forms homooligomeric complexes; probably tetrameric. Can heterooligomerize with MCOLN1; heteromeric assemblies have different channel properties as compared to the respective homooligomers and may be tissue-specific. Interacts with TMEM176A. As to expression, expressed in activated macrophages and microglia (at protein level). In terms of tissue distribution, isoform 1 is widely expressed at very low levels. Isoform 2 is expressed at high levels in lymphoid tissues (thymus and spleen) and kidney, and at moderate levels in heart, lung, liver and stomach.

The protein resides in the cell membrane. It localises to the lysosome membrane. Its subcellular location is the recycling endosome membrane. It catalyses the reaction Ca(2+)(in) = Ca(2+)(out). The catalysed reaction is Fe(2+)(in) = Fe(2+)(out). Fe(2+) channel activity is potentiated by low pH. Nonselective cation channel probably playing a role in the regulation of membrane trafficking events. Acts as a Ca(2+)-permeable cation channel with inwardly rectifying activity. May activate ARF6 and be involved in the trafficking of GPI-anchored cargo proteins to the cell surface via the ARF6-regulated recycling pathway. May play a role in immune processes. In adaptive immunity, TRPML2 and TRPML1 may play redundant roles in the function of the specialized lysosomes of B cells. In the innate immune response, may play a role in the regulation of chemokine secretion and macrophage migration. Through a possible and probably tissue-specific heteromerization with MCOLN1 may be at least in part involved in many lysosome-dependent cellular events. Also functions as a Fe(2+) permeable channel. In Mus musculus (Mouse), this protein is Mucolipin-2 (Mcoln2).